The primary structure comprises 102 residues: Iron-sulfur cluster assembly protein CyaY (102 aa).

Belongs to the frataxin family.

Involved in iron-sulfur (Fe-S) cluster assembly. May act as a regulator of Fe-S biogenesis. In Histophilus somni (strain 2336) (Haemophilus somnus), this protein is Iron-sulfur cluster assembly protein CyaY.